A 206-amino-acid chain; its full sequence is Emopamil-binding protein-like (206 aa).

4 helical membrane passes run 10 to 30 (EAGS…ALGL), 42 to 62 (WVLA…GAFV), 101 to 121 (LEIL…YAIV), and 165 to 185 (LWVY…LLLW). The 146-residue stretch at 39-184 (VERWVLAWLC…LWVLIPGLLL (146 aa)) folds into the EXPERA domain.

Belongs to the EBP family. Homodimer.

Its subcellular location is the endoplasmic reticulum membrane. Its function is as follows. Does not possess sterol isomerase activity and does not bind sigma ligands. The polypeptide is Emopamil-binding protein-like (Ebpl) (Mus musculus (Mouse)).